Reading from the N-terminus, the 480-residue chain is Coronin-2B (480 aa).

WD repeat units follow at residues 85–125 (GHQG…LKRN), 135–177 (GHSR…KMID), 179–217 (HRDVILCMSFNTDGSLLATTCKDKKLRVLEPRSGRVLQE), 220–263 (CKTH…MPVT), and 265–308 (EEID…PYLT). Positions 436-475 (NELLRMFFRQQEEIRRLKEQLSQRDLLVRQLELELKNLRN) form a coiled coil.

Belongs to the WD repeat coronin family.

It localises to the cytoplasm. The protein localises to the cytoskeleton. May play a role in the reorganization of neuronal actin structure. In Xenopus tropicalis (Western clawed frog), this protein is Coronin-2B (coro2b).